The chain runs to 212 residues: Large ribosomal subunit protein uL4 (212 aa).

Belongs to the universal ribosomal protein uL4 family. As to quaternary structure, part of the 50S ribosomal subunit.

Functionally, one of the primary rRNA binding proteins, this protein initially binds near the 5'-end of the 23S rRNA. It is important during the early stages of 50S assembly. It makes multiple contacts with different domains of the 23S rRNA in the assembled 50S subunit and ribosome. Its function is as follows. Forms part of the polypeptide exit tunnel. The sequence is that of Large ribosomal subunit protein uL4 from Caulobacter sp. (strain K31).